Consider the following 305-residue polypeptide: Mitochondrial uncoupling protein 2 (305 aa).

Solcar repeat units follow at residues 10-104, 114-205, and 214-297; these read ISFL…VKTL, IPLY…IKET, and DSVL…VKKV. 6 helical membrane-spanning segments follow: residues 16 to 36, 73 to 93, 120 to 140, 179 to 199, 220 to 240, and 270 to 290; these read FICS…LDTA, ISGL…YGGL, ILAA…TDLV, TGLG…LASY, LLAG…IDVV, and YKGF…MFLT.

This sequence belongs to the mitochondrial carrier (TC 2.A.29) family.

Its subcellular location is the mitochondrion inner membrane. Its function is as follows. PUMPS are mitochondrial transporter proteins that create proton leaks across the inner mitochondrial membrane, thus uncoupling oxidative phosphorylation. This leads to a decrease in the efficiency of oxidative phosphorylation and an increase in heat production. May be involved in protecting plant cells against oxidative stress damage. This chain is Mitochondrial uncoupling protein 2 (PUMP2), found in Arabidopsis thaliana (Mouse-ear cress).